Consider the following 243-residue polypeptide: 2-C-methyl-D-erythritol 4-phosphate cytidylyltransferase (243 aa).

Belongs to the IspD/TarI cytidylyltransferase family. IspD subfamily.

It catalyses the reaction 2-C-methyl-D-erythritol 4-phosphate + CTP + H(+) = 4-CDP-2-C-methyl-D-erythritol + diphosphate. The protein operates within isoprenoid biosynthesis; isopentenyl diphosphate biosynthesis via DXP pathway; isopentenyl diphosphate from 1-deoxy-D-xylulose 5-phosphate: step 2/6. Functionally, catalyzes the formation of 4-diphosphocytidyl-2-C-methyl-D-erythritol from CTP and 2-C-methyl-D-erythritol 4-phosphate (MEP). The sequence is that of 2-C-methyl-D-erythritol 4-phosphate cytidylyltransferase from Aeromonas hydrophila subsp. hydrophila (strain ATCC 7966 / DSM 30187 / BCRC 13018 / CCUG 14551 / JCM 1027 / KCTC 2358 / NCIMB 9240 / NCTC 8049).